A 437-amino-acid polypeptide reads, in one-letter code: Doublesex- and mab-3-related transcription factor A2 (437 aa).

The DM DNA-binding region spans 49–96 (CARCRNHGVVSALKGHKRYCRWKDCMCAKCTLIAERQRVMAAQVALRR). Disordered regions lie at residues 163–254 (SVTP…ARQR) and 297–317 (DKSEETWSRDGALPSIQPSVS). Low complexity-rich tracts occupy residues 179–201 (SESVSGSAPGASSPEARPGSGSE) and 223–235 (SPSSISPLGSESG). In terms of domain architecture, DMA spans 254–289 (RTPIDILTRVFPAQKRSVLELVLQGCGGDVVQAIEQ).

The protein belongs to the DMRT family.

The protein resides in the nucleus. Its function is as follows. May be involved in sexual development. In Xenopus tropicalis (Western clawed frog), this protein is Doublesex- and mab-3-related transcription factor A2 (dmrta2).